A 274-amino-acid chain; its full sequence is 2-amino-4,5-dihydroxy-6-oxo-7-(phosphonooxy)heptanoate synthase (274 aa).

It belongs to the DeoC/FbaB aldolase family. GriI subfamily. Homodecamer.

The enzyme catalyses 2-amino-4,5-dihydroxy-6-oxo-7-(phosphooxy)heptanoate = L-aspartate 4-semialdehyde + dihydroxyacetone phosphate. Functionally, catalyzes aldol condensation between L-aspartate-4-semialdehyde (ASA) and dihydroxyacetone phosphate (DHAP), to form 2-amino-4,5-dihydroxy-6-oxo-7-(phosphonooxy)heptanoate. The sequence is that of 2-amino-4,5-dihydroxy-6-oxo-7-(phosphonooxy)heptanoate synthase (griI) from Streptomyces griseus subsp. griseus (strain JCM 4626 / CBS 651.72 / NBRC 13350 / KCC S-0626 / ISP 5235).